Reading from the N-terminus, the 307-residue chain is Nucleotide-binding protein Sca_0414 (307 aa).

ATP is bound at residue 19–26; it reads GMSGAGKS. 70–73 is a binding site for GTP; it reads DLRG.

The protein belongs to the RapZ-like family.

Its function is as follows. Displays ATPase and GTPase activities. The chain is Nucleotide-binding protein Sca_0414 from Staphylococcus carnosus (strain TM300).